The chain runs to 281 residues: Bifunctional protein FolD (281 aa).

NADP(+)-binding positions include 164-166 (GRS), S189, and T230.

Belongs to the tetrahydrofolate dehydrogenase/cyclohydrolase family. Homodimer.

The catalysed reaction is (6R)-5,10-methylene-5,6,7,8-tetrahydrofolate + NADP(+) = (6R)-5,10-methenyltetrahydrofolate + NADPH. It carries out the reaction (6R)-5,10-methenyltetrahydrofolate + H2O = (6R)-10-formyltetrahydrofolate + H(+). Its pathway is one-carbon metabolism; tetrahydrofolate interconversion. In terms of biological role, catalyzes the oxidation of 5,10-methylenetetrahydrofolate to 5,10-methenyltetrahydrofolate and then the hydrolysis of 5,10-methenyltetrahydrofolate to 10-formyltetrahydrofolate. The polypeptide is Bifunctional protein FolD (Dictyoglomus turgidum (strain DSM 6724 / Z-1310)).